Consider the following 159-residue polypeptide: Protein-export protein SecB (159 aa).

Belongs to the SecB family. In terms of assembly, homotetramer, a dimer of dimers. One homotetramer interacts with 1 SecA dimer.

The protein localises to the cytoplasm. One of the proteins required for the normal export of preproteins out of the cell cytoplasm. It is a molecular chaperone that binds to a subset of precursor proteins, maintaining them in a translocation-competent state. It also specifically binds to its receptor SecA. The polypeptide is Protein-export protein SecB (Burkholderia vietnamiensis (strain G4 / LMG 22486) (Burkholderia cepacia (strain R1808))).